The sequence spans 594 residues: Chitooligosaccharidolytic beta-N-acetylglucosaminidase (594 aa).

A signal peptide spans 1–22; that stretch reads MWSRRIPLFIFGVLVLILSVAA. Cystine bridges form between C31-C59 and C36-C55. A glycan (N-linked (GlcNAc...) asparagine) is linked at N164. Catalysis depends on charge relay system residues D249 and H303. 2 disulfides stabilise this stretch: C316–C373 and C326–C331. Catalysis depends on E368, which acts as the Charge relay system. N-linked (GlcNAc...) asparagine glycosylation occurs at N375. Intrachain disulfides connect C478–C491 and C585–C592.

The protein belongs to the glycosyl hydrolase 20 family. As to quaternary structure, homodimer.

It carries out the reaction Hydrolysis of terminal non-reducing N-acetyl-D-hexosamine residues in N-acetyl-beta-D-hexosaminides.. Its activity is regulated as follows. Inhibited by O-(2-acetamido-2-deoxy-D-glucopyransylidene)-amino-N-phenylcarbamate (PUGNAc). Inhibited by thiabendazole (TMG)-chitotriomycin. Inhibited by 6-(dimethylamino)-2-(2-(((5-methyl-1,3,4-thiadiazol-2-yl)methyl)amino)ethyl)- 1H-benzo[de]isoquinoline-1,3(2H)-dione (Q2), a synthesized non-carbohydrate unsymmetrical dyad of naphthalimide and thiadiazole having a dimethylamino group at C4 of the naphthalimide. Inhibited poorly by N-acetyl-glucosamine (NAG)-thiazoline (NGT), but when the thiazoline ring of NGT is replaced by a bulky substituent such as in compound 1,2-dideoxy-2'-methylamino-alpha-D-glucopyranoso-[2,1-d]-Delta2'-thiazoline (NMAGT), the inhibition constant Ki is lowered 600-fold compared to that of NGT. Inhibited by berberine, berberine analogs thalifendine and palmatine, and berberine derivative SYSU-1, but not by berberine analog tetrahydroberberine. Its function is as follows. Hydrolyzes one beta-GlcNAc unit at a time from the non-reducing ends of substrates, with a preference for shorter substrates. The 2-acetamido group and the beta-glycoside bond linkage in the substrate are required for its activity. Active with p-nitrophenyl (pNP)-beta-GlcNAc, pNP-beta-GalNAc and chitooligosaccharides (degree of polymerization from 2 to 6), but not with the complex N-glycan substrate (GlcNAcbeta-1,2Manalpha-1,6)(GlcNAcbeta-1,2Manalpha-1,3)Manbeta-1,4GlcNAcbeta-1,4GlcNAc-PA (GnGn-PA), pNP-alpha-GlcNAc or with the long polymer colloidal chitin. Involved in chitin catabolism. Involved in the degradation of old cuticle during the pupation stage. The polypeptide is Chitooligosaccharidolytic beta-N-acetylglucosaminidase (Ostrinia furnacalis (Asian corn borer)).